The following is a 166-amino-acid chain: Orotate phosphoribosyltransferase (166 aa).

5-phospho-alpha-D-ribose 1-diphosphate-binding positions include arginine 83, lysine 84, histidine 89, and 109–117 (DDVATTGGS). 2 residues coordinate orotate: threonine 113 and arginine 141.

This sequence belongs to the purine/pyrimidine phosphoribosyltransferase family. PyrE subfamily. Homodimer. Mg(2+) is required as a cofactor.

It catalyses the reaction orotidine 5'-phosphate + diphosphate = orotate + 5-phospho-alpha-D-ribose 1-diphosphate. It participates in pyrimidine metabolism; UMP biosynthesis via de novo pathway; UMP from orotate: step 1/2. Functionally, catalyzes the transfer of a ribosyl phosphate group from 5-phosphoribose 1-diphosphate to orotate, leading to the formation of orotidine monophosphate (OMP). The polypeptide is Orotate phosphoribosyltransferase (Picrophilus torridus (strain ATCC 700027 / DSM 9790 / JCM 10055 / NBRC 100828 / KAW 2/3)).